The chain runs to 652 residues: tRNA-guanine(15) transglycosylase (652 aa).

The Nucleophile role is filled by Asp88. Asp123 and Ala194 together coordinate substrate. Cys280, Cys282, and Cys285 together coordinate Zn(2+). In terms of domain architecture, PUA spans 577-652 (KYRVVIDSEV…AAVSVRSGFK (76 aa)).

It belongs to the archaeosine tRNA-ribosyltransferase family. Zn(2+) serves as cofactor.

It carries out the reaction guanosine(15) in tRNA + 7-cyano-7-deazaguanine = 7-cyano-7-carbaguanosine(15) in tRNA + guanine. The protein operates within tRNA modification; archaeosine-tRNA biosynthesis. In terms of biological role, exchanges the guanine residue with 7-cyano-7-deazaguanine (preQ0) at position 15 in the dihydrouridine loop (D-loop) of archaeal tRNAs. The chain is tRNA-guanine(15) transglycosylase from Methanococcus aeolicus (strain ATCC BAA-1280 / DSM 17508 / OCM 812 / Nankai-3).